We begin with the raw amino-acid sequence, 285 residues long: ATP synthase gamma chain (285 aa).

Belongs to the ATPase gamma chain family. In terms of assembly, F-type ATPases have 2 components, CF(1) - the catalytic core - and CF(0) - the membrane proton channel. CF(1) has five subunits: alpha(3), beta(3), gamma(1), delta(1), epsilon(1). CF(0) has three main subunits: a, b and c.

It is found in the cell membrane. Functionally, produces ATP from ADP in the presence of a proton gradient across the membrane. The gamma chain is believed to be important in regulating ATPase activity and the flow of protons through the CF(0) complex. The sequence is that of ATP synthase gamma chain from Dehalococcoides mccartyi (strain CBDB1).